Here is a 1007-residue protein sequence, read N- to C-terminus: MAATEPPSLREQAEMDDADNSEKSVNEENGEVSEDQSQNKHSRHKKKKHKHRSKHKKHKHSSEEDRDKKHKHKHKHKKHKRKEVIEASDKEGLSPAKRTKLDDLALLEDLEKQRALIKAELDNELMEGKVQSGMGLILQGYESGSEEEGEIHEKARNGNRSSTRSSSTRGKLEITDNKNSAKKRSKSRSKERTRHRSDKRKSKGAGEMLREKANRSKSKERRKSKSPSKRSKSQDQARKSKSPPLRRRSQEKVGKARSPAEEKMKSEEKGKIKDRKKSPIVNERSRDRSKKSKSPVDLRDKSKDRRSRSKERKSKRSEIDKEKKPIKSPSKDASSGKENRSPSRRPGRSPKRRSLSPKLRDKSRRSRSPLLNDRRSKQSKSPSRTLSPGRRAKSRSLERKRREPERRRLSSPRTRPRDDILGRCERSKDASPINRWSPTRRRSRSPIRRRSRSPLRRSRSPRRRSRSPRRRDRSRRSRSRLRRRSRSRGGHRRRSRSKVKEDKFKGSLSEGMKVEQESSSDDNLEDFDVEEEDEEALIEQRRIQRQAIVQKYKYLAEDSNISVPSEPSSPQSSTRSRSPSPDDILERVAADVKEYERENVDTFEASVKAKHNLMTVEQNNGSSQKKILAPDMFTESDDMFAAYFDSARLRAAGIGKDFKENPNLRDNWTDAEGYYRVNIGEVLDKRYNVYGYTGQGVFSNVVRARDNARANQEVAVKIIRNNELMQKTGLKELEFLKKLNDADPDDKFHCLRLFRHFYHKQHLCLVFEPLSMNLREVLKKYGKDVGLHIKAVRSYSQQLFLALKLLKRCNILHADIKPDNILVNESKTILKLCDFGSASHVADNDITPYLVSRFYRAPEIIIGKSYDYGIDMWSVGCTLYELYTGKILFPGKTNNHMLKLAMDLKGKMPNKMIRKGVFKDQHFDQNLNFMYIEVDKVTEREKVTVMSTINPTKDLLADLIGCQRLPEDQRKKVHQLKDLLDQILMLDPAKRISINQALQHAFIQEKI.

Residues methionine 1 to aspartate 102 form a disordered region. Alanine 2 is subject to N-acetylalanine. Phosphoserine is present on residues serine 8, serine 21, serine 24, and serine 33. Composition is skewed to basic residues over residues lysine 40–histidine 60 and lysine 68–lysine 82. Over residues glutamate 83 to glycine 92 the composition is skewed to basic and acidic residues. Residues serine 88 and serine 94 each carry the phosphoserine modification. At lysine 100 the chain carries N6-acetyllysine; alternate. Lysine 100 is covalently cross-linked (Glycyl lysine isopeptide (Lys-Gly) (interchain with G-Cter in SUMO2); alternate). A Glycyl lysine isopeptide (Lys-Gly) (interchain with G-Cter in SUMO2) cross-link involves residue lysine 112. A Glycyl lysine isopeptide (Lys-Gly) (interchain with G-Cter in SUMO2); alternate cross-link involves residue lysine 118. Residue lysine 118 forms a Glycyl lysine isopeptide (Lys-Gly) (interchain with G-Cter in SUMO1); alternate linkage. The residue at position 132 (serine 132) is a Phosphoserine. Position 141 is a phosphotyrosine (tyrosine 141). Disordered stretches follow at residues tyrosine 141 to glutamate 535 and asparagine 560 to aspartate 583. Phosphoserine is present on residues serine 143, serine 145, and serine 167. Residues glycine 158 to arginine 169 show a composition bias toward low complexity. Residues lysine 171 and lysine 178 each participate in a glycyl lysine isopeptide (Lys-Gly) (interchain with G-Cter in SUMO2) cross-link. Basic residues-rich tracts occupy residues serine 180–lysine 203 and arginine 215–serine 231. 6 positions are modified to phosphoserine: serine 240, serine 242, serine 258, serine 278, serine 292, and serine 294. Residues arginine 248–lysine 271 show a composition bias toward basic and acidic residues. Residues serine 294–lysine 303 are compositionally biased toward basic and acidic residues. Over residues aspartate 304–lysine 315 the composition is skewed to basic residues. Residues arginine 316 to proline 325 are compositionally biased toward basic and acidic residues. A phosphoserine mark is found at serine 328, serine 354, serine 356, serine 366, and serine 368. Residues proline 342–arginine 367 are compositionally biased toward basic residues. Threonine 385 is modified (phosphothreonine). The residue at position 387 (serine 387) is a Phosphoserine. 2 stretches are compositionally biased toward basic and acidic residues: residues arginine 395 to arginine 408 and arginine 415 to aspartate 429. Serine 427, serine 431, and serine 437 each carry phosphoserine. The span at proline 438–serine 497 shows a compositional bias: basic residues. Phosphoserine occurs at positions 518, 519, 520, 565, 569, 576, 578, and 580. Positions serine 518 to glutamate 535 are enriched in acidic residues. Over residues serine 562 to proline 581 the composition is skewed to low complexity. Residues lysine 593 and lysine 659 each participate in a glycyl lysine isopeptide (Lys-Gly) (interchain with G-Cter in SUMO2) cross-link. The Protein kinase domain occupies tyrosine 687–lysine 1006. ATP is bound by residues threonine 693 to valine 701 and lysine 717. The residue at position 717 (lysine 717) is an N6-acetyllysine. The active-site Proton acceptor is the aspartate 815. Position 849 is a phosphotyrosine (tyrosine 849). Serine 852 carries the phosphoserine modification.

This sequence belongs to the protein kinase superfamily. CMGC Ser/Thr protein kinase family. In terms of assembly, interacts with CLK1 C-terminus. Associates with the U5 snRNP and NCOR1 deacetylase complexes. Identified in the spliceosome C complex. Phosphorylated by CLK1. Autophosphorylated; phosphorylation inhibits interaction with its targets, such as PRPF6 or SMARCA4.

It is found in the nucleus. The protein resides in the chromosome. The protein localises to the centromere. Its subcellular location is the kinetochore. The enzyme catalyses L-seryl-[protein] + ATP = O-phospho-L-seryl-[protein] + ADP + H(+). It carries out the reaction L-threonyl-[protein] + ATP = O-phospho-L-threonyl-[protein] + ADP + H(+). In terms of biological role, serine/threonine kinase involved in spliceosomal assembly as well as mitosis and signaling regulation. Connects chromatin mediated regulation of transcription and pre-mRNA splicing. During spliceosomal assembly, interacts with and phosphorylates PRPF6 and PRPF31, components of the U4/U6-U5 tri-small nuclear ribonucleoprotein (snRNP), to facilitate the formation of the spliceosome B complex. Plays a role in regulating transcription and the spindle assembly checkpoint (SAC). Associates with U5 snRNP and NCOR1 deacetylase complexes which may allow a coordination of pre-mRNA splicing with chromatin remodeling events involved in transcriptional regulation. Associates and probably phosphorylates SMARCA4 and NCOR1. Phosphorylates SRSF1. Associates with kinetochores during mitosis and is necessary for recruitment and maintenance of the checkpoint proteins such as MAD1L1 and MAD12L1 at the kinetochores. Phosphorylates and regulates the activity of the transcription factors such as ELK1 and KLF13. Phosphorylates nuclear YAP1 and WWTR1/TAZ which induces nuclear exclusion and regulates Hippo signaling pathway, involved in tissue growth control. This Mus musculus (Mouse) protein is Serine/threonine-protein kinase PRP4 homolog (Prp4k).